Reading from the N-terminus, the 171-residue chain is Alpha-amylase/trypsin inhibitor CMd (171 aa).

Positions 1–24 are cleaved as a signal peptide; it reads MACKSSRSLLLLATVMVSVFAAAA.

Belongs to the protease inhibitor I6 (cereal trypsin/alpha-amylase inhibitor) family. Heterotetramer of one CMa, one CMb and two CMd chains. Five disulfide bonds, which are essential for the inhibitor activity, are probably present. In terms of tissue distribution, endosperm.

The protein localises to the secreted. Part of a complex with inhibitory activity, but CMd is inactive as a separate subunit. The polypeptide is Alpha-amylase/trypsin inhibitor CMd (IAT3) (Hordeum vulgare (Barley)).